An 852-amino-acid chain; its full sequence is Zinc finger protein 484 (852 aa).

Positions 8–78 (VSFKDVTVDF…DGEIPSQSRP (71 aa)) constitute a KRAB domain. Residue Lys156 forms a Glycyl lysine isopeptide (Lys-Gly) (interchain with G-Cter in SUMO2) linkage. The C2H2-type 1; degenerate zinc finger occupies 223–245 (CECNQCGKPLHHKQALIQQQKIH). A C2H2-type 2; degenerate zinc finger spans residues 279 to 301 (HECHECEAVFTQKSQLDGSQRVY). The segment at 328–350 (YKCSDYGRAFIQKSDLFRCQRIH) adopts a C2H2-type 3; degenerate zinc-finger fold. The C2H2-type 4; degenerate zinc finger occupies 356-378 (YEYSECEKNLPQNSNLNIHKKIH). 15 consecutive C2H2-type zinc fingers follow at residues 384–406 (FECTECGKAFTRKSTLSMHQKIH), 412–434 (YVCTECGKAFIRKSHFITHERIH), 440–462 (YECSDCGKSFIKKSQLHVHQRIH), 468–490 (FICSECGKVFTHKTNLIIHQKIH), 496–518 (YICTVCGKAFTDRSNLIKHQKIH), 524–546 (YKCSDCGKSFTWKSRLRIHQKCH), 552–574 (YECSECGKAFIQKSTLSMHQRIH), 580–602 (YVCTECGKAFFHKSHFITHERIH), 608–630 (YECSICGKSFTKKSQLHVHQQIH), 636–658 (YRCAECGKAFTDRSNLFTHQKIH), 664–686 (YKCSDCGKAFTRKSGLHIHQQSH), 692–714 (YECSECGKAFARKSTLIMHQRIH), 720–742 (YICNECGKSFIQKSHLNRHRRIH), 748–770 (YECSDCGKSFIKKSQLHEHHRIH), and 776–798 (YICAECGKAFTIRSNLIKHQKIH). A Glycyl lysine isopeptide (Lys-Gly) (interchain with G-Cter in SUMO2) cross-link involves residue Lys816.

The protein belongs to the krueppel C2H2-type zinc-finger protein family.

It localises to the nucleus. May be involved in transcriptional regulation. In Homo sapiens (Human), this protein is Zinc finger protein 484 (ZNF484).